The primary structure comprises 302 residues: MAATQELLLQLQKDNRDGRQRKQELEKLMRGLEAESESLNQRLQDLSERERSLLRRRSQAAQPLQGEAREAARERAERVRRRLEEAERHKEYLEQHSRQLQEQWEELSSQLFYYGGELQSQKSTEQQLAAQLVTLQNELELAETKCALQEEKLQQDALQTAEAWAIFQEQTVVLQEVQVKVMEAAEELDAWQSGRELCDGQLRGVQYSTESLMEEMARADRETRLFGGPRALAIRRCVLGALQVLLTLPLLFLGLSLLWTVLLDPGAVSAWLWSLTSETTLRRLRYTLSPLLELRANGLLPT.

Disordered regions lie at residues M1–R21 and L54–R73. The stretch at Q5–T160 forms a coiled coil. Residues V238–L258 traverse the membrane as a helical segment.

It belongs to the TMEM191 family.

It localises to the membrane. This is Transmembrane protein 191C from Homo sapiens (Human).